We begin with the raw amino-acid sequence, 216 residues long: Cyclo(L-leucyl-L-leucyl) synthase (216 aa).

Catalysis depends on Ser14, which acts as the Nucleophile. Residues Asn17, 155–159, and Tyr179 each bind substrate; that span reads YIFDE.

It belongs to the CDPS family.

It carries out the reaction 2 L-leucyl-tRNA(Leu) = cyclo(L-leucyl-L-leucyl) + 2 tRNA(Leu) + 2 H(+). In terms of biological role, it uses activated amino acids in the form of aminoacyl-tRNAs (aa-tRNAs) as substrates to catalyze the ATP-independent formation of cyclodipeptides which are intermediates in diketopiperazine (DKP) biosynthetic pathways. Catalyzes the formation of cyclo(L-Leu-L-Leu) (cLL) from L-leucyl-tRNA(Leu). Can incorporate various nonpolar residues, such as L-leucine and L-methionine, into cyclodipeptides. The polypeptide is Cyclo(L-leucyl-L-leucyl) synthase (Corynebacterium jeikeium (strain K411)).